Reading from the N-terminus, the 232-residue chain is Urease accessory protein UreF (232 aa).

Belongs to the UreF family. UreD, UreF and UreG form a complex that acts as a GTP-hydrolysis-dependent molecular chaperone, activating the urease apoprotein by helping to assemble the nickel containing metallocenter of UreC. The UreE protein probably delivers the nickel.

It is found in the cytoplasm. Functionally, required for maturation of urease via the functional incorporation of the urease nickel metallocenter. This is Urease accessory protein UreF from Trichodesmium erythraeum (strain IMS101).